We begin with the raw amino-acid sequence, 425 residues long: 3-phosphoshikimate 1-carboxyvinyltransferase (425 aa).

3-phosphoshikimate-binding residues include Lys-23, Ser-24, and Arg-28. Position 23 (Lys-23) interacts with phosphoenolpyruvate. Residues Gly-96 and Arg-124 each contribute to the phosphoenolpyruvate site. 3-phosphoshikimate contacts are provided by Thr-170, Ser-171, Gln-172, Ser-198, Asp-314, and Lys-341. Residue Gln-172 coordinates phosphoenolpyruvate. Asp-314 (proton acceptor) is an active-site residue. Phosphoenolpyruvate contacts are provided by Arg-345, Arg-386, and Lys-411.

Belongs to the EPSP synthase family. As to quaternary structure, monomer.

It is found in the cytoplasm. It carries out the reaction 3-phosphoshikimate + phosphoenolpyruvate = 5-O-(1-carboxyvinyl)-3-phosphoshikimate + phosphate. The protein operates within metabolic intermediate biosynthesis; chorismate biosynthesis; chorismate from D-erythrose 4-phosphate and phosphoenolpyruvate: step 6/7. Functionally, catalyzes the transfer of the enolpyruvyl moiety of phosphoenolpyruvate (PEP) to the 5-hydroxyl of shikimate-3-phosphate (S3P) to produce enolpyruvyl shikimate-3-phosphate and inorganic phosphate. This Nostoc sp. (strain PCC 7120 / SAG 25.82 / UTEX 2576) protein is 3-phosphoshikimate 1-carboxyvinyltransferase.